The following is a 35-amino-acid chain: Phosphoribulokinase (35 aa).

This sequence belongs to the phosphoribulokinase family.

It localises to the plastid. The protein localises to the chloroplast. The catalysed reaction is D-ribulose 5-phosphate + ATP = D-ribulose 1,5-bisphosphate + ADP + H(+). It functions in the pathway carbohydrate biosynthesis; Calvin cycle. With respect to regulation, light regulated via thioredoxin by reversible oxidation/reduction of sulfhydryl/disulfide groups. In Pinus pinaster (Maritime pine), this protein is Phosphoribulokinase.